The primary structure comprises 263 residues: Purine nucleoside phosphorylase SAR1163 (263 aa).

Residues H79, C124, and H141 each coordinate Zn(2+).

It belongs to the purine nucleoside phosphorylase YfiH/LACC1 family. Homodimer. Requires Cu(2+) as cofactor. The cofactor is Zn(2+).

The enzyme catalyses adenosine + phosphate = alpha-D-ribose 1-phosphate + adenine. The catalysed reaction is S-methyl-5'-thioadenosine + phosphate = 5-(methylsulfanyl)-alpha-D-ribose 1-phosphate + adenine. It catalyses the reaction inosine + phosphate = alpha-D-ribose 1-phosphate + hypoxanthine. It carries out the reaction adenosine + H2O + H(+) = inosine + NH4(+). Its function is as follows. Purine nucleoside enzyme that catalyzes the phosphorolysis of adenosine and inosine nucleosides, yielding D-ribose 1-phosphate and the respective free bases, adenine and hypoxanthine. Also catalyzes the phosphorolysis of S-methyl-5'-thioadenosine into adenine and S-methyl-5-thio-alpha-D-ribose 1-phosphate. Also has adenosine deaminase activity. This chain is Purine nucleoside phosphorylase SAR1163, found in Staphylococcus aureus (strain MRSA252).